Consider the following 682-residue polypeptide: Elongation factor G (682 aa).

Positions 8-282 (QKFRNFGIMA…AVVDYLPSPV (275 aa)) constitute a tr-type G domain. GTP contacts are provided by residues 17–24 (AHIDAGKT), 81–85 (DTPGH), and 135–138 (NKMD).

Belongs to the TRAFAC class translation factor GTPase superfamily. Classic translation factor GTPase family. EF-G/EF-2 subfamily.

Its subcellular location is the cytoplasm. Catalyzes the GTP-dependent ribosomal translocation step during translation elongation. During this step, the ribosome changes from the pre-translocational (PRE) to the post-translocational (POST) state as the newly formed A-site-bound peptidyl-tRNA and P-site-bound deacylated tRNA move to the P and E sites, respectively. Catalyzes the coordinated movement of the two tRNA molecules, the mRNA and conformational changes in the ribosome. The polypeptide is Elongation factor G (Malacoplasma penetrans (strain HF-2) (Mycoplasma penetrans)).